Here is a 1055-residue protein sequence, read N- to C-terminus: Vacuolar protein sorting-associated protein 54 (1055 aa).

Positions 363-383 form a coiled coil; the sequence is TKKIIEVHQKYEQKKHLLAKL. The tract at residues 774–794 is disordered; sequence IDDGPTKKPFKRTGSSATIDS.

It belongs to the VPS54 family. In terms of assembly, component of the Golgi-associated retrograde protein (GARP) complex, also called VFT (VPS fifty-three) complex, composed of VPS51, VPS52, VPS53 and VPS54.

It is found in the golgi apparatus. The protein resides in the trans-Golgi network. Its function is as follows. Acts as a component of the GARP complex that is involved in retrograde transport from early and late endosomes to the trans-Golgi network (TGN). The GARP complex facilitates tethering as well as SNARE complex assembly at the Golgi. This Caenorhabditis briggsae protein is Vacuolar protein sorting-associated protein 54 (vps-54).